We begin with the raw amino-acid sequence, 614 residues long: Two-component response regulator ORR33 (614 aa).

Residues 14-139 (RVMIIDDDAK…VMARLWRVVA (126 aa)) enclose the Response regulatory domain. 4-aspartylphosphate is present on D67. Positions 193-220 (RQLTINVVDDGNRGSGSGGGGGGGADAN) are disordered. The span at 205 to 217 (RGSGSGGGGGGGA) shows a compositional bias: gly residues.

The protein belongs to the ARR family. Type-B subfamily. Post-translationally, two-component system major event consists of a His-to-Asp phosphorelay between a sensor histidine kinase (HK) and a response regulator (RR). In plants, the His-to-Asp phosphorelay involves an additional intermediate named Histidine-containing phosphotransfer protein (HPt). This multistep phosphorelay consists of a His-Asp-His-Asp sequential transfer of a phosphate group between first a His and an Asp of the HK protein, followed by the transfer to a conserved His of the HPt protein and finally the transfer to an Asp in the receiver domain of the RR protein.

Functions as a response regulator involved in His-to-Asp phosphorelay signal transduction system. Phosphorylation of the Asp residue in the receiver domain activates the ability of the protein to promote the transcription of target genes. May directly activate some type-A response regulators in response to cytokinins. This chain is Two-component response regulator ORR33, found in Oryza sativa subsp. indica (Rice).